A 344-amino-acid chain; its full sequence is Unsaturated rhamnogalacturonyl hydrolase YesR (344 aa).

Residues D30–W31, N74, and Q118–F128 each bind substrate. D135 functions as the Proton donor in the catalytic mechanism. Substrate contacts are provided by residues R198–W202 and N308–A309.

It belongs to the glycosyl hydrolase 105 family. Monomer.

It is found in the cytoplasm. The catalysed reaction is 2-O-(4-deoxy-beta-L-threo-hex-4-enopyranuronosyl)-alpha-L-rhamnose + H2O = 5-dehydro-4-deoxy-D-glucuronate + L-rhamnopyranose. Its function is as follows. Catalyzes the hydrolysis of unsaturated rhamnogalacturonan disaccharide to yield unsaturated D-galacturonic acid and L-rhamnose. It cannot act on unsaturated glucuronyl hydrolase (UGL) substrates containing unsaturated D-glucuronic acid at the non-reducing terminus, although the active pockets of YesR and UGL are very similar. The chain is Unsaturated rhamnogalacturonyl hydrolase YesR (yesR) from Bacillus subtilis (strain 168).